We begin with the raw amino-acid sequence, 200 residues long: UPF0316 protein SAUSA300_1892 (200 aa).

A run of 3 helical transmembrane segments spans residues 8–28 (PWLM…FLTM), 40–60 (IAAS…GLVM), and 66–86 (IQNI…GMKI).

Belongs to the UPF0316 family.

It localises to the cell membrane. The protein is UPF0316 protein SAUSA300_1892 of Staphylococcus aureus (strain USA300).